A 306-amino-acid chain; its full sequence is Pantothenate kinase (306 aa).

ATP is bound at residue 91 to 98 (GSVAVGKS).

The protein belongs to the prokaryotic pantothenate kinase family.

It is found in the cytoplasm. The catalysed reaction is (R)-pantothenate + ATP = (R)-4'-phosphopantothenate + ADP + H(+). Its pathway is cofactor biosynthesis; coenzyme A biosynthesis; CoA from (R)-pantothenate: step 1/5. This is Pantothenate kinase from Streptococcus pneumoniae serotype 19F (strain G54).